Consider the following 620-residue polypeptide: Glutathione-regulated potassium-efflux system protein KefC (620 aa).

The next 12 membrane-spanning stretches (helical) occupy residues 4 to 24, 26 to 46, 54 to 74, 90 to 110, 114 to 134, 149 to 169, 178 to 198, 218 to 238, 270 to 290, 294 to 314, 327 to 347, and 359 to 379; these read HTLV…PIAV, LGLG…PWGL, SILH…GLEL, GALQ…LLGL, VAEL…MQAM, FAVL…IPLL, MGAF…VVLL, VFSA…EEVG, GLLL…GTLL, LRIV…LWLI, WFAV…GAAQ, and SLTL…VILN. In terms of domain architecture, RCK N-terminal spans 399-518; the sequence is QPRVIIAGFG…AGVEKPERET (120 aa). Positions 597-620 are disordered; the sequence is GWQGTEEGKHTGNMADEPETKPSS.

The protein belongs to the monovalent cation:proton antiporter 2 (CPA2) transporter (TC 2.A.37) family. KefC subfamily. As to quaternary structure, homodimer. Interacts with the regulatory subunit KefF.

The protein resides in the cell inner membrane. Functionally, pore-forming subunit of a potassium efflux system that confers protection against electrophiles. Catalyzes K(+)/H(+) antiport. The chain is Glutathione-regulated potassium-efflux system protein KefC from Escherichia coli O139:H28 (strain E24377A / ETEC).